A 496-amino-acid chain; its full sequence is PE-PGRS family protein PE_PGRS1 (496 aa).

The region spanning 4-94 is the PE domain; the sequence is LITSPATVAA…VCYAAAETAN (91 aa). The tract at residues 461–480 is disordered; the sequence is LIGNGGDGGPGMFGGPGGAG.

The protein belongs to the mycobacterial PE family. PGRS subfamily.

The protein localises to the secreted. It localises to the cell wall. It is found in the host mitochondrion. Functionally, when expressed in host mitochondria, induces mitochondrial stress which results in mitochondrial membrane depolarization, up-regulation of mitochondrial superoxides and release of cytochrome-C in the cytoplasm. The cytochrome-C in cytoplasm triggers the activation of caspase-9, caspase-3 and caspase-7, leading to the apoptosis of host macrophages. Being a late expressing protein, apoptosis induction by PE_PGRS1 may facilitate the M.tuberculosis survival and silent expansion of its niche at the site of granuloma. Its function is as follows. When expressed in THP-1 macrophages, promotes the survival of mycobacteria within macrophages after a 24- to 48-hour infection by blocking endoplasmic reticulum stress and inhibiting host cell apoptosis. Can chelate excessive intracellular calcium in THP-1 macrophages, which reduces the concentration of intracellular free Ca(2+) and blocks the PERK-eIF2alpha-ATF4 axis, thereby inhibiting the endoplasmic reticulum stress caused by infection. It also reduces the apoptosis of THP-1 macrophages by decreasing the activation of caspase-3 and caspase-9. The sequence is that of PE-PGRS family protein PE_PGRS1 from Mycobacterium tuberculosis (strain ATCC 25618 / H37Rv).